Here is a 387-residue protein sequence, read N- to C-terminus: Succinate--CoA ligase [ADP-forming] subunit beta (387 aa).

The region spanning 9–244 (KALLQRYGVN…WSQDDAKEAE (236 aa)) is the ATP-grasp domain. Residues Lys-46, 53–55 (GRG), Glu-99, Leu-102, and Glu-107 each bind ATP. Residues Asn-199 and Asp-213 each contribute to the Mg(2+) site. Residues Asn-264 and 321-323 (GIM) contribute to the substrate site.

It belongs to the succinate/malate CoA ligase beta subunit family. In terms of assembly, heterotetramer of two alpha and two beta subunits. Mg(2+) is required as a cofactor.

The catalysed reaction is succinate + ATP + CoA = succinyl-CoA + ADP + phosphate. It catalyses the reaction GTP + succinate + CoA = succinyl-CoA + GDP + phosphate. The protein operates within carbohydrate metabolism; tricarboxylic acid cycle; succinate from succinyl-CoA (ligase route): step 1/1. Succinyl-CoA synthetase functions in the citric acid cycle (TCA), coupling the hydrolysis of succinyl-CoA to the synthesis of either ATP or GTP and thus represents the only step of substrate-level phosphorylation in the TCA. The beta subunit provides nucleotide specificity of the enzyme and binds the substrate succinate, while the binding sites for coenzyme A and phosphate are found in the alpha subunit. The chain is Succinate--CoA ligase [ADP-forming] subunit beta from Methylobacillus flagellatus (strain ATCC 51484 / DSM 6875 / VKM B-1610 / KT).